A 365-amino-acid polypeptide reads, in one-letter code: Flagellar P-ring protein (365 aa).

The N-terminal stretch at 1-21 is a signal peptide; the sequence is MIKRIISIVFLLLTLPQLALA.

This sequence belongs to the FlgI family. As to quaternary structure, the basal body constitutes a major portion of the flagellar organelle and consists of four rings (L,P,S, and M) mounted on a central rod.

The protein localises to the periplasm. Its subcellular location is the bacterial flagellum basal body. Assembles around the rod to form the L-ring and probably protects the motor/basal body from shearing forces during rotation. The polypeptide is Flagellar P-ring protein (Geobacter metallireducens (strain ATCC 53774 / DSM 7210 / GS-15)).